Consider the following 302-residue polypeptide: Putative S-adenosyl-L-methionine-dependent methyltransferase MAV_2803 (302 aa).

S-adenosyl-L-methionine-binding positions include D129 and 158-159 (DL).

The protein belongs to the UPF0677 family.

In terms of biological role, exhibits S-adenosyl-L-methionine-dependent methyltransferase activity. This is Putative S-adenosyl-L-methionine-dependent methyltransferase MAV_2803 from Mycobacterium avium (strain 104).